A 272-amino-acid polypeptide reads, in one-letter code: 1,4-dihydroxy-2-naphthoyl-CoA synthase (272 aa).

Substrate-binding positions include Arg33, 72 to 76 (SGGDQ), Tyr84, 116 to 120 (YAIGG), Thr142, Ser148, Tyr245, and Lys260. 141–143 (QTG) lines the hydrogencarbonate pocket.

It belongs to the enoyl-CoA hydratase/isomerase family. MenB subfamily. It depends on hydrogencarbonate as a cofactor.

It catalyses the reaction 2-succinylbenzoyl-CoA + H(+) = 1,4-dihydroxy-2-naphthoyl-CoA + H2O. It functions in the pathway quinol/quinone metabolism; 1,4-dihydroxy-2-naphthoate biosynthesis; 1,4-dihydroxy-2-naphthoate from chorismate: step 6/7. The protein operates within quinol/quinone metabolism; menaquinone biosynthesis. In terms of biological role, converts o-succinylbenzoyl-CoA (OSB-CoA) to 1,4-dihydroxy-2-naphthoyl-CoA (DHNA-CoA). This chain is 1,4-dihydroxy-2-naphthoyl-CoA synthase, found in Staphylococcus epidermidis (strain ATCC 12228 / FDA PCI 1200).